The following is a 390-amino-acid chain: uncharacterized protein (390 aa).

The next 12 helical transmembrane spans lie at 4-24 (IWLF…LSPL), 40-60 (GWMV…AGPI), 68-88 (TVML…GIAP), 98-118 (FAAG…IPVI), 130-150 (IATA…GFLA), 159-179 (FVLS…MPGI), 205-225 (VILL…SFLG), 236-256 (VSQI…GSLI), 273-293 (GMLL…LFLV), 295-315 (AGFF…MGVF), 329-349 (LSNA…GFLY), and 356-376 (GAVT…YQTI).

Belongs to the major facilitator superfamily.

It localises to the cell membrane. This is an uncharacterized protein from Bacillus subtilis (strain 168).